The chain runs to 213 residues: Probable transaldolase (213 aa).

K83 functions as the Schiff-base intermediate with substrate in the catalytic mechanism.

Belongs to the transaldolase family. Type 3B subfamily.

The protein resides in the cytoplasm. The enzyme catalyses D-sedoheptulose 7-phosphate + D-glyceraldehyde 3-phosphate = D-erythrose 4-phosphate + beta-D-fructose 6-phosphate. It participates in carbohydrate degradation; pentose phosphate pathway; D-glyceraldehyde 3-phosphate and beta-D-fructose 6-phosphate from D-ribose 5-phosphate and D-xylulose 5-phosphate (non-oxidative stage): step 2/3. Its function is as follows. Transaldolase is important for the balance of metabolites in the pentose-phosphate pathway. The sequence is that of Probable transaldolase from Geobacillus kaustophilus (strain HTA426).